Here is a 502-residue protein sequence, read N- to C-terminus: Glycerol kinase (502 aa).

Position 14 (threonine 14) interacts with ADP. ATP-binding residues include threonine 14, threonine 15, and serine 16. Residue threonine 14 participates in sn-glycerol 3-phosphate binding. Arginine 18 provides a ligand contact to ADP. 4 residues coordinate sn-glycerol 3-phosphate: arginine 84, glutamate 85, tyrosine 136, and aspartate 246. Arginine 84, glutamate 85, tyrosine 136, aspartate 246, and glutamine 247 together coordinate glycerol. Threonine 268 and glycine 311 together coordinate ADP. Residues threonine 268, glycine 311, glutamine 315, and glycine 412 each contribute to the ATP site. ADP contacts are provided by glycine 412 and asparagine 416.

Belongs to the FGGY kinase family.

It catalyses the reaction glycerol + ATP = sn-glycerol 3-phosphate + ADP + H(+). It participates in polyol metabolism; glycerol degradation via glycerol kinase pathway; sn-glycerol 3-phosphate from glycerol: step 1/1. With respect to regulation, inhibited by fructose 1,6-bisphosphate (FBP). In terms of biological role, key enzyme in the regulation of glycerol uptake and metabolism. Catalyzes the phosphorylation of glycerol to yield sn-glycerol 3-phosphate. This is Glycerol kinase from Pasteurella multocida (strain Pm70).